The sequence spans 157 residues: 2-C-methyl-D-erythritol 2,4-cyclodiphosphate synthase (157 aa).

A divalent metal cation-binding residues include Asp-8 and His-10. 4-CDP-2-C-methyl-D-erythritol 2-phosphate-binding positions include 8–10 and 34–35; these read DVH and HS. His-42 contacts a divalent metal cation. Residues 56–58, 61–65, 100–106, 132–135, Phe-139, and Arg-142 contribute to the 4-CDP-2-C-methyl-D-erythritol 2-phosphate site; these read DIG, FPDTD, AQRPKMA, and TTTE.

Belongs to the IspF family. Homotrimer. The cofactor is a divalent metal cation.

It catalyses the reaction 4-CDP-2-C-methyl-D-erythritol 2-phosphate = 2-C-methyl-D-erythritol 2,4-cyclic diphosphate + CMP. Its pathway is isoprenoid biosynthesis; isopentenyl diphosphate biosynthesis via DXP pathway; isopentenyl diphosphate from 1-deoxy-D-xylulose 5-phosphate: step 4/6. Functionally, involved in the biosynthesis of isopentenyl diphosphate (IPP) and dimethylallyl diphosphate (DMAPP), two major building blocks of isoprenoid compounds. Catalyzes the conversion of 4-diphosphocytidyl-2-C-methyl-D-erythritol 2-phosphate (CDP-ME2P) to 2-C-methyl-D-erythritol 2,4-cyclodiphosphate (ME-CPP) with a corresponding release of cytidine 5-monophosphate (CMP). This Geobacter sulfurreducens (strain ATCC 51573 / DSM 12127 / PCA) protein is 2-C-methyl-D-erythritol 2,4-cyclodiphosphate synthase.